Reading from the N-terminus, the 75-residue chain is Tautomerase PptA (75 aa).

Pro-2 serves as the catalytic Proton acceptor; via imino nitrogen.

It belongs to the 4-oxalocrotonate tautomerase family. PptA subfamily. In terms of assembly, homodimer.

It localises to the cytoplasm. The polypeptide is Tautomerase PptA (Klebsiella pneumoniae (strain 342)).